We begin with the raw amino-acid sequence, 68 residues long: Conotoxin TsMMSK-021 (68 aa).

Positions 1 to 20 (MMSKLGVLLTICLLLFPLTA) are cleaved as a signal peptide. Residues 21-52 (VRLDGDQHTDRPADRMQDIATEQHPLFDPVKR) constitute a propeptide that is removed on maturation. Cystine bridges form between C53–C66, C54–C62, and C58–C65. At P64 the chain carries 4-hydroxyproline.

Belongs to the conotoxin M superfamily. As to expression, expressed by the venom duct.

It localises to the secreted. The sequence is that of Conotoxin TsMMSK-021 from Conus tessulatus (Tessellate cone).